The sequence spans 152 residues: Avidin (152 aa).

A signal peptide spans 1–24; sequence MVHATSPLLLLLLLSLALVAPGLS. Residues 26-149 form the Avidin-like domain; the sequence is RKCSLTGKWT…GINIFTRLRT (124 aa). A disulfide bridge links Cys-28 with Cys-107. Asn-41 carries N-linked (GlcNAc...) asparagine glycosylation. A biotin-binding site is contributed by Tyr-57.

Belongs to the avidin/streptavidin family. Homotetramer. Post-translationally, N-linked glycan at Asn-41 consists of GlcNAc(beta1-2)Man(alpha1-3)[GlcNAc(beta1-4)][Man(alpha1-?)Man(alpha1-6)] Man(beta1-4)GlcNAc(beta1-4)GlcNAc. In terms of tissue distribution, synthesized in hen oviduct and concentrated in egg white (where it represents 0.05% of the total protein).

It is found in the secreted. Its function is as follows. The biological function of avidin is not known. Forms a strong non-covalent specific complex with biotin (one molecule of biotin per subunit of avidin). In Gallus gallus (Chicken), this protein is Avidin (AVD).